Reading from the N-terminus, the 266-residue chain is Glucosamine-6-phosphate deaminase (266 aa).

Residue aspartate 72 is the Proton acceptor; for enolization step of the active site. Aspartate 141 acts as the For ring-opening step in catalysis. Histidine 143 (proton acceptor; for ring-opening step) is an active-site residue. The active-site For ring-opening step is glutamate 148.

The protein belongs to the glucosamine/galactosamine-6-phosphate isomerase family. NagB subfamily. In terms of assembly, homohexamer.

The enzyme catalyses alpha-D-glucosamine 6-phosphate + H2O = beta-D-fructose 6-phosphate + NH4(+). It participates in amino-sugar metabolism; N-acetylneuraminate degradation; D-fructose 6-phosphate from N-acetylneuraminate: step 5/5. With respect to regulation, allosterically activated by N-acetylglucosamine 6-phosphate (GlcNAc6P). In terms of biological role, catalyzes the reversible isomerization-deamination of glucosamine 6-phosphate (GlcN6P) to form fructose 6-phosphate (Fru6P) and ammonium ion. The sequence is that of Glucosamine-6-phosphate deaminase from Edwardsiella ictaluri (strain 93-146).